The chain runs to 1009 residues: DNA ligase 4 (1009 aa).

Disordered regions lie at residues Met1–Leu34 and Lys51–Ala72. Basic residues predominate over residues Lys51–Gly65. ATP is bound by residues Glu315, Lys317, Leu318, Arg322, Glu384, Phe424, Glu484, Lys489, Lys506, and Lys508. Lys317 (N6-AMP-lysine intermediate) is an active-site residue. Mg(2+) is bound at residue Glu384. Glu484 provides a ligand contact to Mg(2+). BRCT domains are found at residues Pro715–Leu808 and Pro887–Pro995.

The protein belongs to the ATP-dependent DNA ligase family. Mg(2+) is required as a cofactor.

The protein resides in the nucleus. It carries out the reaction ATP + (deoxyribonucleotide)n-3'-hydroxyl + 5'-phospho-(deoxyribonucleotide)m = (deoxyribonucleotide)n+m + AMP + diphosphate.. In terms of biological role, DNA ligase involved in DNA non-homologous end joining (NHEJ); required for double-strand break (DSB) repair. This is DNA ligase 4 (lig4) from Emericella nidulans (strain FGSC A4 / ATCC 38163 / CBS 112.46 / NRRL 194 / M139) (Aspergillus nidulans).